A 511-amino-acid chain; its full sequence is GMP synthase [glutamine-hydrolyzing] (511 aa).

In terms of domain architecture, Glutamine amidotransferase type-1 spans 5–195 (AILVLDFGSQ…VFKICQAQIN (191 aa)). The active-site Nucleophile is the cysteine 82. Active-site residues include histidine 169 and glutamate 171. The region spanning 196–386 (WSLEGNLETI…LGIKKESLYR (191 aa)) is the GMPS ATP-PPase domain. Residue 223-229 (SGGTDSL) coordinates ATP.

In terms of assembly, homodimer.

It catalyses the reaction XMP + L-glutamine + ATP + H2O = GMP + L-glutamate + AMP + diphosphate + 2 H(+). It participates in purine metabolism; GMP biosynthesis; GMP from XMP (L-Gln route): step 1/1. Catalyzes the synthesis of GMP from XMP. In Borreliella burgdorferi (strain ATCC 35210 / DSM 4680 / CIP 102532 / B31) (Borrelia burgdorferi), this protein is GMP synthase [glutamine-hydrolyzing] (guaA).